The sequence spans 471 residues: ATP synthase subunit beta, chloroplastic (471 aa).

Residue 151 to 158 (GGAGVGKT) coordinates ATP.

Belongs to the ATPase alpha/beta chains family. In terms of assembly, F-type ATPases have 2 components, CF(1) - the catalytic core - and CF(0) - the membrane proton channel. CF(1) has five subunits: alpha(3), beta(3), gamma(1), delta(1), epsilon(1). CF(0) has four main subunits: a(1), b(1), b'(1) and c(9-12).

It is found in the plastid. The protein localises to the chloroplast thylakoid membrane. The catalysed reaction is ATP + H2O + 4 H(+)(in) = ADP + phosphate + 5 H(+)(out). Produces ATP from ADP in the presence of a proton gradient across the membrane. The catalytic sites are hosted primarily by the beta subunits. This Rhodomonas salina (Cryptomonas salina) protein is ATP synthase subunit beta, chloroplastic.